We begin with the raw amino-acid sequence, 226 residues long: HTH-type transcriptional regulator Rv0324 (226 aa).

The HTH arsR-type domain occupies 7 to 101 (RKAALLDQVA…LVQVVADEHL (95 aa)). The segment at residues 41–64 (VEAIATATGMNLTTASANLQALKS) is a DNA-binding region (H-T-H motif). The Rhodanese domain maps to 129–218 (EAGEVTLVDV…WRLAGLPVDE (90 aa)). Catalysis depends on Cys177, which acts as the Cysteine persulfide intermediate.

Part of a regulatory network that coordinates tolerance to the antitubercular drug bedaquiline. This chain is HTH-type transcriptional regulator Rv0324, found in Mycobacterium tuberculosis (strain ATCC 25618 / H37Rv).